We begin with the raw amino-acid sequence, 360 residues long: Histidinol-phosphate aminotransferase (360 aa).

Lys218 is subject to N6-(pyridoxal phosphate)lysine.

This sequence belongs to the class-II pyridoxal-phosphate-dependent aminotransferase family. Histidinol-phosphate aminotransferase subfamily. As to quaternary structure, homodimer. Requires pyridoxal 5'-phosphate as cofactor.

The catalysed reaction is L-histidinol phosphate + 2-oxoglutarate = 3-(imidazol-4-yl)-2-oxopropyl phosphate + L-glutamate. The protein operates within amino-acid biosynthesis; L-histidine biosynthesis; L-histidine from 5-phospho-alpha-D-ribose 1-diphosphate: step 7/9. This is Histidinol-phosphate aminotransferase from Chlorobium phaeovibrioides (strain DSM 265 / 1930) (Prosthecochloris vibrioformis (strain DSM 265)).